A 351-amino-acid polypeptide reads, in one-letter code: NADP-dependent isopropanol dehydrogenase (351 aa).

Residues cysteine 37, histidine 59, glutamate 60, and aspartate 150 each contribute to the Zn(2+) site. NADP(+)-binding positions include isoleucine 175–valine 178, glycine 198–arginine 200, tyrosine 218, isoleucine 265–tyrosine 267, and lysine 340.

The protein belongs to the zinc-containing alcohol dehydrogenase family. In terms of assembly, homotetramer. Zn(2+) is required as a cofactor.

The enzyme catalyses propan-2-ol + NADP(+) = acetone + NADPH + H(+). Its function is as follows. Alcohol dehydrogenase with a preference for medium chain secondary alcohols, such as 2-butanol and isopropanol. Has very low activity with primary alcohols, such as ethanol. Under physiological conditions, the enzyme reduces aldehydes and 2-ketones to produce secondary alcohols. Is active with acetaldehyde and propionaldehyde. This Clostridium beijerinckii (Clostridium MP) protein is NADP-dependent isopropanol dehydrogenase (adh).